The sequence spans 324 residues: Delta-aminolevulinic acid dehydratase (324 aa).

Zn(2+) contacts are provided by Cys120, Cys122, and Cys130. The Schiff-base intermediate with substrate role is filled by Lys195. 5-aminolevulinate contacts are provided by Arg205 and Arg216. Glu232 serves as a coordination point for Mg(2+). The active-site Schiff-base intermediate with substrate is Lys247. The 5-aminolevulinate site is built by Ser273 and Tyr312.

This sequence belongs to the ALAD family. Homooctamer. The cofactor is Zn(2+).

The catalysed reaction is 2 5-aminolevulinate = porphobilinogen + 2 H2O + H(+). Its pathway is porphyrin-containing compound metabolism; protoporphyrin-IX biosynthesis; coproporphyrinogen-III from 5-aminolevulinate: step 1/4. Its activity is regulated as follows. Allosteric enzyme. Stimulated by magnesium ions. In terms of biological role, catalyzes an early step in the biosynthesis of tetrapyrroles. Binds two molecules of 5-aminolevulinate per subunit, each at a distinct site, and catalyzes their condensation to form porphobilinogen. The polypeptide is Delta-aminolevulinic acid dehydratase (hemB) (Escherichia coli (strain K12)).